The primary structure comprises 540 residues: ATP-dependent RNA helicase DBP3 (540 aa).

Basic and acidic residues predominate over residues 1–35; sequence MTVEESKKRKLTDDVAIKQNEKKIKKDKKVKDKKD. The tract at residues 1-89 is disordered; that stretch reads MTVEESKKRK…TTEQPSKQVK (89 aa). Residues 36–52 are compositionally biased toward basic residues; that stretch reads KKDKKDKKDKKEKKEKK. 2 stretches are compositionally biased toward basic and acidic residues: residues 53–62 and 68–79; these read EKKEKNDKKD and DKKAEQVDKLSE. Positions 130–156 match the Q motif motif; it reads LAFNQISLDKEVQNEIAKFPKPTPIQA. The Helicase ATP-binding domain occupies 159-332; it reads WPYLLSGKDV…STFMKEPVKV (174 aa). 172–179 is a binding site for ATP; it reads AETGSGKT. The DEAD box motif lies at 279–282; the sequence is DEAD. Residues 361 to 510 enclose the Helicase C-terminal domain; it reads KLLDLLKKYQ…PVPEDLIKFG (150 aa).

Belongs to the DEAD box helicase family. DDX5/DBP2 subfamily.

Its subcellular location is the nucleus. It is found in the nucleolus. It catalyses the reaction ATP + H2O = ADP + phosphate + H(+). ATP-dependent RNA helicase required for 60S ribosomal subunit synthesis. Involved in efficient pre-rRNA processing, predominantly at site A3, which is necessary for the normal formation of 25S and 5.8S rRNAs. This chain is ATP-dependent RNA helicase DBP3 (DBP3), found in Candida glabrata (strain ATCC 2001 / BCRC 20586 / JCM 3761 / NBRC 0622 / NRRL Y-65 / CBS 138) (Yeast).